A 323-amino-acid polypeptide reads, in one-letter code: tRNA U34 carboxymethyltransferase (323 aa).

Carboxy-S-adenosyl-L-methionine is bound by residues lysine 93, tryptophan 107, lysine 112, glycine 132, 154–156, 182–183, methionine 197, tyrosine 201, and arginine 316; these read DPS and VE.

Belongs to the class I-like SAM-binding methyltransferase superfamily. CmoB family. In terms of assembly, homotetramer.

The enzyme catalyses carboxy-S-adenosyl-L-methionine + 5-hydroxyuridine(34) in tRNA = 5-carboxymethoxyuridine(34) in tRNA + S-adenosyl-L-homocysteine + H(+). Its function is as follows. Catalyzes carboxymethyl transfer from carboxy-S-adenosyl-L-methionine (Cx-SAM) to 5-hydroxyuridine (ho5U) to form 5-carboxymethoxyuridine (cmo5U) at position 34 in tRNAs. This is tRNA U34 carboxymethyltransferase from Pseudoalteromonas atlantica (strain T6c / ATCC BAA-1087).